Consider the following 516-residue polypeptide: Ribonuclease Y (516 aa).

The chain crosses the membrane as a helical span at residues methionine 1 to tryptophan 21. In terms of domain architecture, KH spans threonine 206–leucine 269. An HD domain is found at alanine 332–alanine 425.

Belongs to the RNase Y family.

The protein resides in the cell membrane. Endoribonuclease that initiates mRNA decay. In Lachnoclostridium phytofermentans (strain ATCC 700394 / DSM 18823 / ISDg) (Clostridium phytofermentans), this protein is Ribonuclease Y.